A 367-amino-acid chain; its full sequence is Flagellar P-ring protein (367 aa).

Positions 1 to 21 are cleaved as a signal peptide; the sequence is MKIIQTFFIITLLWLSQGVQA.

The protein belongs to the FlgI family. The basal body constitutes a major portion of the flagellar organelle and consists of four rings (L,P,S, and M) mounted on a central rod.

The protein localises to the periplasm. Its subcellular location is the bacterial flagellum basal body. Its function is as follows. Assembles around the rod to form the L-ring and probably protects the motor/basal body from shearing forces during rotation. This is Flagellar P-ring protein from Nitrosococcus oceani (strain ATCC 19707 / BCRC 17464 / JCM 30415 / NCIMB 11848 / C-107).